A 217-amino-acid chain; its full sequence is GTP cyclohydrolase 1 (217 aa).

Residues C109, H112, and C180 each coordinate Zn(2+).

Belongs to the GTP cyclohydrolase I family. Toroid-shaped homodecamer, composed of two pentamers of five dimers.

It catalyses the reaction GTP + H2O = 7,8-dihydroneopterin 3'-triphosphate + formate + H(+). It functions in the pathway cofactor biosynthesis; 7,8-dihydroneopterin triphosphate biosynthesis; 7,8-dihydroneopterin triphosphate from GTP: step 1/1. The sequence is that of GTP cyclohydrolase 1 from Vibrio cholerae serotype O1 (strain ATCC 39315 / El Tor Inaba N16961).